Here is a 116-residue protein sequence, read N- to C-terminus: Protein TRACHEARY ELEMENT DIFFERENTIATION-RELATED 6 (116 aa).

Over 1–24 the chain is Extracellular; the sequence is MASTDSVYRPTPTPDHDTTVVVVV. Residues 25–45 form a helical membrane-spanning segment; that stretch reads FVSLGCVMFLAFLAFVIWFLI. Residues 46–116 lie on the Cytoplasmic side of the membrane; it reads KKRSRKHRER…GVGSSVVSRS (71 aa).

Interacts with CESA7/IRX3, a subunit of the secondary cell wall (SCW)-related cellulose synthase complex. In terms of tissue distribution, expressed preferentially in differentiating vessel elements in seedlings.

It is found in the cell membrane. It localises to the secreted. The protein resides in the cell wall. Functionally, involved in the secondary cell wall (SCW) formation of vessel elements (e.g. protoxylem and metaxylem), thus promoting tracheary element (TE) differentiation. The chain is Protein TRACHEARY ELEMENT DIFFERENTIATION-RELATED 6 from Arabidopsis thaliana (Mouse-ear cress).